A 312-amino-acid polypeptide reads, in one-letter code: Olfactory receptor-like protein COR2 (312 aa).

Topologically, residues 1-26 (MASGNCTTPTTFILSGLTDNPRLQMP) are extracellular. A glycan (N-linked (GlcNAc...) asparagine) is linked at Asn5. The helical transmembrane segment at 27–49 (LFMVFLVIYTTTLLTNLGLIALI) threads the bilayer. The Cytoplasmic segment spans residues 50-57 (GMDLHLQT). The chain crosses the membrane as a helical span at residues 58-79 (PMYIFLQNLSFTDAAYSTVITP). Residues 80 to 100 (KMLATFLEERRTISYVGCILQ) are Extracellular-facing. A disulfide bridge connects residues Cys97 and Cys179. A helical membrane pass occupies residues 101–120 (YFSFVLLTTSEWLLLAVMAY). Topologically, residues 121–139 (DRYVAICKPLLYPSIMTKA) are cytoplasmic. A helical transmembrane segment spans residues 140-164 (VCWRLVKGLYSLAFLNSLVHTSGLL). The Extracellular portion of the chain corresponds to 165-205 (KLSFCSSNVVNHFFCDNRPLFQISSSSTTLNELLVIISGSL). A helical transmembrane segment spans residues 206-226 (FVMSSIITILISYVFIILTVV). Over 227–239 (MIRSKDGKYKAFS) the chain is Cytoplasmic. A helical transmembrane segment spans residues 240-260 (TCTSHLMAVSLFHGTVIFMYL). Topologically, residues 261-271 (RSVKLFSLDTD) are extracellular. The chain crosses the membrane as a helical span at residues 272–292 (KIASLFYTVVIPMLNPLIYSW). Residues 293 to 312 (RNKEVKDALRRLTATSVWLH) lie on the Cytoplasmic side of the membrane.

This sequence belongs to the G-protein coupled receptor 1 family.

The protein resides in the cell membrane. In terms of biological role, odorant receptor. This Gallus gallus (Chicken) protein is Olfactory receptor-like protein COR2 (COR2).